A 491-amino-acid chain; its full sequence is G2/mitotic-specific cyclin-2 (491 aa).

Position 2 is an N-acetylserine (Ser-2). 2 disordered regions span residues 59 to 107 (EGSR…DPSS) and 164 to 184 (HPARSQLQVRNTESETDSGKK). Positions 67–77 (TRESVSRSTAA) are enriched in polar residues.

It belongs to the cyclin family. Cyclin AB subfamily. Interacts with NAP1.

Essential for the control of the cell cycle at the G2/M (mitosis) transition. Interacts with the CDC2 protein kinase to form MPF. G2/M cyclins accumulate steadily during G2 and are abruptly destroyed at mitosis. This Saccharomyces cerevisiae (strain ATCC 204508 / S288c) (Baker's yeast) protein is G2/mitotic-specific cyclin-2 (CLB2).